The sequence spans 308 residues: Ribosomal RNA small subunit methyltransferase H (308 aa).

S-adenosyl-L-methionine-binding positions include 33 to 35 (GGY), Asp51, Phe82, Asp96, and Gln103.

The protein belongs to the methyltransferase superfamily. RsmH family.

The protein resides in the cytoplasm. It carries out the reaction cytidine(1402) in 16S rRNA + S-adenosyl-L-methionine = N(4)-methylcytidine(1402) in 16S rRNA + S-adenosyl-L-homocysteine + H(+). Its function is as follows. Specifically methylates the N4 position of cytidine in position 1402 (C1402) of 16S rRNA. The polypeptide is Ribosomal RNA small subunit methyltransferase H (Rickettsia canadensis (strain McKiel)).